The primary structure comprises 396 residues: Ribosomal RNA large subunit methyltransferase I (396 aa).

A PUA domain is found at 2 to 81 (SVRLVLAKGR…ESIDIAFFSR (80 aa)).

The protein belongs to the methyltransferase superfamily. RlmI family.

It localises to the cytoplasm. The catalysed reaction is cytidine(1962) in 23S rRNA + S-adenosyl-L-methionine = 5-methylcytidine(1962) in 23S rRNA + S-adenosyl-L-homocysteine + H(+). Specifically methylates the cytosine at position 1962 (m5C1962) of 23S rRNA. The protein is Ribosomal RNA large subunit methyltransferase I of Shigella flexneri serotype 5b (strain 8401).